Reading from the N-terminus, the 157-residue chain is 2-C-methyl-D-erythritol 2,4-cyclodiphosphate synthase (157 aa).

2 residues coordinate a divalent metal cation: aspartate 8 and histidine 10. Residues 8 to 10 (DVH) and 34 to 35 (HS) contribute to the 4-CDP-2-C-methyl-D-erythritol 2-phosphate site. Histidine 42 contacts a divalent metal cation. 4-CDP-2-C-methyl-D-erythritol 2-phosphate is bound by residues 56 to 58 (DIG), 61 to 65 (FPDTD), 100 to 106 (AQAPKMA), 132 to 135 (TTTE), phenylalanine 139, and arginine 142.

Belongs to the IspF family. In terms of assembly, homotrimer. A divalent metal cation serves as cofactor.

It carries out the reaction 4-CDP-2-C-methyl-D-erythritol 2-phosphate = 2-C-methyl-D-erythritol 2,4-cyclic diphosphate + CMP. It participates in isoprenoid biosynthesis; isopentenyl diphosphate biosynthesis via DXP pathway; isopentenyl diphosphate from 1-deoxy-D-xylulose 5-phosphate: step 4/6. Involved in the biosynthesis of isopentenyl diphosphate (IPP) and dimethylallyl diphosphate (DMAPP), two major building blocks of isoprenoid compounds. Catalyzes the conversion of 4-diphosphocytidyl-2-C-methyl-D-erythritol 2-phosphate (CDP-ME2P) to 2-C-methyl-D-erythritol 2,4-cyclodiphosphate (ME-CPP) with a corresponding release of cytidine 5-monophosphate (CMP). The polypeptide is 2-C-methyl-D-erythritol 2,4-cyclodiphosphate synthase (Pseudomonas syringae pv. syringae (strain B728a)).